Consider the following 255-residue polypeptide: uncharacterized protein (255 aa).

The region spanning 3 to 58 (PVERRQIILEMVAEKGIVSIAELTDRMNVSHMTIRRDLQKLEQQGAVVLVSGGVQS) is the HTH deoR-type domain. A DNA-binding region (H-T-H motif) is located at residues 20-39 (VSIAELTDRMNVSHMTIRRD).

This is an uncharacterized protein from Escherichia coli (strain K12).